The sequence spans 954 residues: MTELLHSLSTQNEFVARHNGPDKQEQATMLKTVNAESLDALIAQTVPAQIRLEAPMQLAPAQSEADMLATMKSFAKLNQLKRTFIGQGYYNTFTPNVILRNVMENPGWYTAYTPYQPEISQGRLESLLNYQQMVMDLTAMEIANASLLDEATAAAEAMALCQRAGKSKSNLFFVADDVHPQTIEVVKTRAAFLGFEVKVDSIDNITQQEAFGALLQYPGTTGEVRDLTDIIAKAQANKTLVTVATDLLASVLLKPAGEMGADVVIGSAQRFGVPMGYGGPHAAFMATRDAHKRTMPGRVIGVSIDAKGNQALRMAMQTREQHIRREKATSNICTAQALLANMAAFYAVYHGPQGLRTIARRAHHLTAILAAGLTKAGYELAHQHFFDTLAINTGAKTDALYQAAQQANINLRKLPNQLGVSFDETTTVADVEALFAIFGIKEEVHALSDRIATNELAAIPESCRRQSAFLTHPVFNTHHSETQMLRYMKHLENKDFSLTHGMIPLGSCTMKLNATAEMIPVTWPEFGALHPFVPKAQAAGYAALAEDLKQKLCEITGYDAFSLQPNSGASGEYAGLVAIQRYHQSRGEGHRNVCLIPSSAHGTNPATAAMVSMKVVVVKCDENGNIDMVDLADKIEKHKDHLSSIMITYPSTHGVYEQQVREVCEMVHAAGGQVYLDGANMNAQVGLTSPGFIGSDVSHLNLHKTFCIPHGGGGPGMGPIGVKSHLAPFLPGHIEGGVEGSDFAVSAADLGSASILPISWAYIAMMGADGLAEATKLAILNANYVMERLRPHYPILYRGANGRVAHECIIDIRPLKEETGISEEDIAKRLMDYGFHAPTMSFPVAGTLMVEPTESEDLAELDRFCDALIAIRGEIDKVKNGEWPLESNPLVHAPHTQADLREEKWDRPYSREIACFPSAHTKASKYWPTVNRVDNVYGDRNLVCSCPSIDSYQD.

Lys704 bears the N6-(pyridoxal phosphate)lysine mark.

It belongs to the GcvP family. In terms of assembly, the glycine cleavage system is composed of four proteins: P, T, L and H. The cofactor is pyridoxal 5'-phosphate.

It catalyses the reaction N(6)-[(R)-lipoyl]-L-lysyl-[glycine-cleavage complex H protein] + glycine + H(+) = N(6)-[(R)-S(8)-aminomethyldihydrolipoyl]-L-lysyl-[glycine-cleavage complex H protein] + CO2. Functionally, the glycine cleavage system catalyzes the degradation of glycine. The P protein binds the alpha-amino group of glycine through its pyridoxal phosphate cofactor; CO(2) is released and the remaining methylamine moiety is then transferred to the lipoamide cofactor of the H protein. This chain is Glycine dehydrogenase (decarboxylating), found in Vibrio cholerae serotype O1 (strain ATCC 39541 / Classical Ogawa 395 / O395).